The sequence spans 47 residues: Conotoxin Bu10 (47 aa).

Positions D1 to R22 are excised as a propeptide. Cystine bridges form between C23–C37, C30–C41, and C36–C46. C46 bears the Cysteine amide mark.

It belongs to the conotoxin O1 superfamily. As to expression, expressed by the venom duct.

It localises to the secreted. In Conus bullatus (Bubble cone), this protein is Conotoxin Bu10.